Here is a 296-residue protein sequence, read N- to C-terminus: CRISPR-associated endonuclease Cas1 2 (296 aa).

Positions 157, 224, and 237 each coordinate Mn(2+).

The protein belongs to the CRISPR-associated endonuclease Cas1 family. Homodimer, forms a heterotetramer with a Cas2 homodimer. Requires Mg(2+) as cofactor. Mn(2+) serves as cofactor.

Functionally, CRISPR (clustered regularly interspaced short palindromic repeat), is an adaptive immune system that provides protection against mobile genetic elements (viruses, transposable elements and conjugative plasmids). CRISPR clusters contain spacers, sequences complementary to antecedent mobile elements, and target invading nucleic acids. CRISPR clusters are transcribed and processed into CRISPR RNA (crRNA). Acts as a dsDNA endonuclease. Involved in the integration of spacer DNA into the CRISPR cassette. This Chlorobaculum tepidum (strain ATCC 49652 / DSM 12025 / NBRC 103806 / TLS) (Chlorobium tepidum) protein is CRISPR-associated endonuclease Cas1 2.